The chain runs to 113 residues: Type III endosome membrane protein TEMP (113 aa).

The disordered stretch occupies residues methionine 1 to proline 22. Over methionine 1–arginine 29 the chain is Extracellular. N-linked (GlcNAc...) asparagine glycosylation is present at asparagine 5. Residues alanine 30–leucine 50 form a helical; Signal-anchor for type III membrane protein membrane-spanning segment. At alanine 51–leucine 113 the chain is on the cytoplasmic side. The tract at residues histidine 66–leucine 113 is disordered. Residues alanine 81–isoleucine 90 are compositionally biased toward acidic residues.

Its subcellular location is the membrane. It localises to the early endosome. The protein resides in the recycling endosome. The protein localises to the cell membrane. Its function is as follows. May be involved in membrane trafficking between endosomes and plasma membrane. The polypeptide is Type III endosome membrane protein TEMP (C1orf210) (Homo sapiens (Human)).